A 136-amino-acid polypeptide reads, in one-letter code: MKISLSTSLFSIEQKVEYFNLNYQSLSDFSVVAKLNYTFTWYGNDFSIGFAPKKGEKLYFDLFFTFKASPNHPFAAENFKPDSEAIDFYVSFSWRLEGKDEVSKKLFELSVFGRARAFQIDDYKINLFSYLVYVIR.

The protein belongs to the MG439/MG440 family.

This is an uncharacterized protein from Mycoplasma pneumoniae (strain ATCC 29342 / M129 / Subtype 1) (Mycoplasmoides pneumoniae).